The sequence spans 208 residues: Uracil phosphoribosyltransferase (208 aa).

5-phospho-alpha-D-ribose 1-diphosphate-binding positions include Arg-78, Arg-103, and Asp-130 to Ser-138. Uracil is bound by residues Ile-193 and Gly-198 to Ala-200. 5-phospho-alpha-D-ribose 1-diphosphate is bound at residue Asp-199.

Belongs to the UPRTase family. Mg(2+) is required as a cofactor.

It catalyses the reaction UMP + diphosphate = 5-phospho-alpha-D-ribose 1-diphosphate + uracil. It participates in pyrimidine metabolism; UMP biosynthesis via salvage pathway; UMP from uracil: step 1/1. Its activity is regulated as follows. Allosterically activated by GTP. In terms of biological role, catalyzes the conversion of uracil and 5-phospho-alpha-D-ribose 1-diphosphate (PRPP) to UMP and diphosphate. The sequence is that of Uracil phosphoribosyltransferase from Escherichia fergusonii (strain ATCC 35469 / DSM 13698 / CCUG 18766 / IAM 14443 / JCM 21226 / LMG 7866 / NBRC 102419 / NCTC 12128 / CDC 0568-73).